Reading from the N-terminus, the 894-residue chain is Kinesin-like protein KIN-UB (894 aa).

A disordered region spans residues 1-53 (MAMASSRNGAVRGSMRPVSGANSSNLRSSSFKSRIPSSAPAPRRSSSASIGAA). Over residues 19–50 (SGANSSNLRSSSFKSRIPSSAPAPRRSSSASI) the composition is skewed to low complexity. The region spanning 60–402 (RVRVAVRLRP…ILFGQRAMKV (343 aa)) is the Kinesin motor domain. Residue 145–152 (GQTGTGKT) coordinates ATP. A D-BOX motif is present at residues 372-380 (RTSLIVTIG). Residues 423 to 588 (VQLDKVIAEN…RSQLVQLTFE (166 aa)) adopt a coiled-coil conformation. Disordered regions lie at residues 530-550 (EEEV…GEGE) and 598-623 (RGAP…ESVN). The segment covering 603 to 623 (NSYSGTDSLPSRHSQARESVN) has biased composition (polar residues). ARM repeat units lie at residues 626–665 (KAPF…NLAA), 667–707 (EANQ…NLAM), 709–749 (EVSQ…NLCG), and 751–790 (DKLQ…NFAK).

Belongs to the TRAFAC class myosin-kinesin ATPase superfamily. Kinesin family. Ungrouped subfamily. Interacts (via C-terminus) with NEK5. As to expression, expressed in the basal regions and petioles of immature leaves and in the root elongation zone.

The protein resides in the cytoplasm. It is found in the cytoskeleton. Involved in the control of epidermal-cell morphogenesis in roots and helical growth of roots by promoting microtubule depolymerization and limiting the accumulation of endoplasmic microtubules. Seems to be involved in the control of cell-file rotation (or twisting). This is Kinesin-like protein KIN-UB from Arabidopsis thaliana (Mouse-ear cress).